The sequence spans 116 residues: MVNYLSLKNNISSNLFSGHNNINQEPICVGDYIRFGLLITEGTKERTQNCEGLVIAKRFSNTCCNLTVRTVFQGIGVERTISLFSPKISKIKILKHYKVRRAKLYYLRRKENVKKK.

The protein belongs to the bacterial ribosomal protein bL19 family.

It localises to the plastid. It is found in the chloroplast. The polypeptide is Large ribosomal subunit protein bL19c (Cyanidium caldarium (Red alga)).